The primary structure comprises 67 residues: Large ribosomal subunit protein bL32 (67 aa).

Residues 1 to 44 (MAVQQNRKSPSKRDMRRSHDALGFSTLSTDSKSGERHRRHHVTK) form a disordered region. Positions 11–20 (SKRDMRRSHD) are enriched in basic and acidic residues.

It belongs to the bacterial ribosomal protein bL32 family.

This Dichelobacter nodosus (strain VCS1703A) protein is Large ribosomal subunit protein bL32.